The primary structure comprises 165 residues: Small ribosomal subunit protein eS10 (165 aa).

Tyr12 is modified (phosphotyrosine). Positions 90–165 are disordered; sequence VPATLRRSRP…FGRGRGQPPQ (76 aa). Residues 97-128 show a composition bias toward basic and acidic residues; the sequence is SRPETGRPRPKGPEGERPARFTRGEADRDTYR. Glycyl lysine isopeptide (Lys-Gly) (interchain with G-Cter in ubiquitin) cross-links involve residues Lys138 and Lys139. The residue at position 146 (Ser146) is a Phosphoserine. At Arg153 the chain carries Omega-N-methylarginine. Residues 154-165 show a composition bias toward gly residues; that stretch reads GGFGRGRGQPPQ. Symmetric dimethylarginine is present on residues Arg158 and Arg160.

Belongs to the eukaryotic ribosomal protein eS10 family. In terms of assembly, component of the small ribosomal subunit. The methylated form interacts with NPM1. Methylated by PRMT5. Methylation is necessary for its interaction with NPS1, its localization in the granular component (GC) region of the nucleolus, for the proper assembly of ribosomes, protein synthesis and optimal cell proliferation. Post-translationally, monoubiquitinated by ZNF598 when a ribosome has stalled during translation of poly(A) sequences, leading to preclude synthesis of a long poly-lysine tail and initiate the ribosome quality control (RQC) pathway to degrade the potentially detrimental aberrant nascent polypeptide. Deubiquitinated by OTUD3 and USP21, antagonizing ZNF598 activity. Deubiquitinated by OTUD1, antagonizing ZNF598 activity and stimulating formation of polysomes: deubiquitination by OTUD1 promotes stability and translation of a subset mRNAs with a high abundance of rare codons can limit the translation rate. Deubiquitinated by USP10.

It localises to the cytoplasm. Its subcellular location is the nucleus. The protein localises to the nucleolus. Component of the 40S ribosomal subunit. The ribosome is a large ribonucleoprotein complex responsible for the synthesis of proteins in the cell. The polypeptide is Small ribosomal subunit protein eS10 (Rps10) (Rattus norvegicus (Rat)).